We begin with the raw amino-acid sequence, 124 residues long: Small ribosomal subunit protein bS6 (124 aa).

The tract at residues Glu-96–Ala-124 is disordered. Residues Ala-115–Ala-124 show a composition bias toward polar residues.

Belongs to the bacterial ribosomal protein bS6 family.

In terms of biological role, binds together with bS18 to 16S ribosomal RNA. In Cupriavidus pinatubonensis (strain JMP 134 / LMG 1197) (Cupriavidus necator (strain JMP 134)), this protein is Small ribosomal subunit protein bS6.